The sequence spans 85 residues: Large ribosomal subunit protein bL27 (85 aa).

Residues 1 to 22 are disordered; that stretch reads MAHKKAGGSSRNGRDSESKRLG.

The protein belongs to the bacterial ribosomal protein bL27 family.

The chain is Large ribosomal subunit protein bL27 from Tolumonas auensis (strain DSM 9187 / NBRC 110442 / TA 4).